The primary structure comprises 326 residues: Protein GVP36 (326 aa).

An N-acetylserine modification is found at serine 2. At serine 2 the chain carries Phosphoserine. Glycyl lysine isopeptide (Lys-Gly) (interchain with G-Cter in ubiquitin) cross-links involve residues lysine 13, lysine 305, and lysine 313. Residues alanine 299–alanine 326 are disordered. Positions proline 302–proline 314 are enriched in basic and acidic residues. The residue at position 319 (serine 319) is a Phosphoserine.

The protein resides in the golgi apparatus membrane. This chain is Protein GVP36 (GVP36), found in Saccharomyces cerevisiae (strain ATCC 204508 / S288c) (Baker's yeast).